The chain runs to 319 residues: Putative binding protein BAB2_1146 (319 aa).

The N-terminal stretch at 1–22 (MKRRTFLAMSLALTFLPSVALA) is a signal peptide.

It belongs to the bacterial solute-binding protein SsuA/TauA family. In terms of assembly, the complex is composed of two ATP-binding proteins (BAB2_1147), two transmembrane proteins (BAB2_1148) and a solute-binding protein (BAB2_1146).

It is found in the periplasm. Probably part of an ABC transporter complex. The sequence is that of Putative binding protein BAB2_1146 from Brucella abortus (strain 2308).